Reading from the N-terminus, the 319-residue chain is MFRFDKEQMVIEFAGAKFGGQPGEYPTALSGTIFYSRHKIVEDAKKGIFDKKAAEALINKQAEMQDITGNSAFVQVFGGTEEALVNYIDFVSEVWDGPMLLDSTSGKARMAAANRATEAGYANQCIYNSINVAAEDEEIENLTNSDVEASIVLCFDPMDPSVAGKLNVLNDGGKTKDIGMLELAEKAGIKYPLIDVAVTPMGNGAGHAVRAAFAVKAKLGLPVGSGIHNVPSAWDWLREFRKGLREEGKDQIAKDVHHVCDIGANIVQTMTSGDYVLYGPIDNAELAFPAVAMTDMIIAETAKEMGTVPVAEHPLNKLI.

Belongs to the MtrH family. As to quaternary structure, the complex is composed of 8 subunits; MtrA, MtrB, MtrC, MtrD, MtrE, MtrF, MtrG and MtrH.

The catalysed reaction is 5-methyl-5,6,7,8-tetrahydromethanopterin + coenzyme M + 2 Na(+)(in) = 5,6,7,8-tetrahydromethanopterin + methyl-coenzyme M + 2 Na(+)(out). The protein operates within one-carbon metabolism; methanogenesis from CO(2); methyl-coenzyme M from 5,10-methylene-5,6,7,8-tetrahydromethanopterin: step 2/2. Its function is as follows. Part of a complex that catalyzes the formation of methyl-coenzyme M and tetrahydromethanopterin from coenzyme M and methyl-tetrahydromethanopterin. This is an energy-conserving, sodium-ion translocating step. MtrH catalyzes the transfer of the methyl group from methyl-tetrahydromethanopterin to the corrinoid prosthetic group of MtrA. The sequence is that of Tetrahydromethanopterin S-methyltransferase subunit H from Methanococcus maripaludis (strain DSM 14266 / JCM 13030 / NBRC 101832 / S2 / LL).